A 408-amino-acid chain; its full sequence is MEGESTTAVMSGFVFGALTFHHLNSGSDTEGFLLGDVVGEAKNSITDSQMDDVEVLYTIDIQKHVPCYKLSRFYNVLGDLNIPELKKLLADQKKSQNVIGWYKFRHNTEQIMTFRERLLHKNLQEHLSNSGLVFLLLTSNPATETKSTHRLEYALHKPQDGFFHKVPLVISNLGMSDQQGYKTLCGSCVSVGLNTTIKKHRLEFFNEDGALAEVNRISNMYTTLQDELKKTCSQLVESEHSVEQLLEAINELKKQIAEKKKLNEETGNKVSEAPEENVLLCEALRKFFPQSTLLQSCRLSLGGRQIPHSCTASHNISDVNELTLMVKQYDIPEAHTRQAGKRKACSKQLGRTLTKKSRLLQLQKQHSQNGDSEGSDSERPLCNSGTETDGDILESLHMDVSRSKSPIF.

The MPN domain occupies 7-155 (TAVMSGFVFG…KSTHRLEYAL (149 aa)). The stretch at 210 to 273 (ALAEVNRISN…EETGNKVSEA (64 aa)) forms a coiled coil. Over residues 360-372 (LQLQKQHSQNGDS) the composition is skewed to polar residues. The disordered stretch occupies residues 360–408 (LQLQKQHSQNGDSEGSDSERPLCNSGTETDGDILESLHMDVSRSKSPIF). A Phosphoserine modification is found at serine 405. The pSXXF motif signature appears at 405–408 (SPIF).

This sequence belongs to the FAM175 family. Abraxas subfamily. Component of the BRCA1-A complex. Component of the BRISC complex. Interacts directly (when phosphorylated at Ser-405) with brca1. Homodimer. The phosphorylated homodimer can interact directly with two brca1 chains, giving rise to a heterotetramer. Post-translationally, phosphorylation of Ser-405 of the pSXXF motif by ATM or ATR constitutes a specific recognition motif for the BRCT domain of BRCA1.

The protein resides in the nucleus. Its function is as follows. Involved in DNA damage response and double-strand break (DSB) repair. Component of the BRCA1-A complex, acting as a central scaffold protein that assembles the various components of the complex and mediates the recruitment of brca1. The BRCA1-A complex specifically recognizes 'Lys-63'-linked ubiquitinated histones H2A and H2AX at DNA lesion sites, leading to target the brca1-bard1 heterodimer to sites of DNA damage at DSBs. This complex also possesses deubiquitinase activity that specifically removes 'Lys-63'-linked ubiquitin on histones H2A and H2AX. In Xenopus tropicalis (Western clawed frog), this protein is BRCA1-A complex subunit Abraxas 1.